We begin with the raw amino-acid sequence, 337 residues long: D-alanine--D-alanine ligase (337 aa).

The ATP-grasp domain maps to 124–330 (KMWFSALGIP…FTEYLSLVIN (207 aa)). Residue 154–209 (ALANWGSIFIKAASQGSSVGCYKVDDSSKVAQVLKDAFGYAPYVVVEKTIKARELE) participates in ATP binding. Asp284, Glu297, and Asn299 together coordinate Mg(2+).

It belongs to the D-alanine--D-alanine ligase family. Mg(2+) is required as a cofactor. It depends on Mn(2+) as a cofactor.

The protein resides in the cytoplasm. The enzyme catalyses 2 D-alanine + ATP = D-alanyl-D-alanine + ADP + phosphate + H(+). Its pathway is cell wall biogenesis; peptidoglycan biosynthesis. Functionally, cell wall formation. The protein is D-alanine--D-alanine ligase of Shewanella putrefaciens (strain CN-32 / ATCC BAA-453).